Here is a 150-residue protein sequence, read N- to C-terminus: Probable cyclase FGR4 (150 aa).

Its pathway is secondary metabolite biosynthesis. Functionally, probable cyclase; part of the gene cluster that mediates the biosynthesis of the tetraketides fugralins such as linear fugralin A and cyclic fugralin B, volatile compounds that play a role in the asexual reproductive cycle but are not involved in pathogenicity. Fugralin B is similar to fugralin A except for a cyclization between the carboxylic acid C-8 and the alcohol on C-4 resulting in a six membered lactone ring, probably catalyzed by the cyclase FGR4. One of the key features of fugralins is the presence of a double methyl group, which is only rarely encountered in fungal secondary metabolites. As the fugralins cluster does not contain an independent methyltransferase, the PKS FGR1 is probably responsible for adding two methyl groups to the same carbon atom. The exact role of the individual cluster genes remains unknown and further work is needed to unravel the biosynthetic pathway. This Gibberella zeae (strain ATCC MYA-4620 / CBS 123657 / FGSC 9075 / NRRL 31084 / PH-1) (Wheat head blight fungus) protein is Probable cyclase FGR4.